The chain runs to 289 residues: Heme oxygenase 1 (289 aa).

The Cytoplasmic portion of the chain corresponds to 1–266 (MERPQLDSMS…SQISTSSSQT (266 aa)). Positions 18, 25, 134, and 183 each coordinate heme b. The segment at 225 to 261 (HKDQSPSQTEFLRQRPASLVQDTTSAETPRGKSQIST) is disordered. A phosphoserine mark is found at serine 229 and serine 242. Positions 244–261 (VQDTTSAETPRGKSQIST) are enriched in polar residues. The helical; Anchor for type IV membrane protein transmembrane segment at 267 to 289 (PLLRWVLTLSFLLATVAVGIYAM) threads the bilayer.

The protein belongs to the heme oxygenase family. Homodimer and higher order homooligomer. Oligomerization is crucial for its stability and function in the endoplasmic reticulum. Interacts with FLVCR2; this interaction is potentiated in the presence of heme. In terms of processing, a soluble form arises by proteolytic removal of the membrane anchor.

It localises to the endoplasmic reticulum membrane. It carries out the reaction heme b + 3 reduced [NADPH--hemoprotein reductase] + 3 O2 = biliverdin IXalpha + CO + Fe(2+) + 3 oxidized [NADPH--hemoprotein reductase] + 3 H2O + H(+). Its activity is regulated as follows. Inhibited by metalloporphyrins such as Sn- and Zn-protoporphyrins. Catalyzes the oxidative cleavage of heme at the alpha-methene bridge carbon, released as carbon monoxide (CO), to generate biliverdin IXalpha, while releasing the central heme iron chelate as ferrous iron. Affords protection against programmed cell death and this cytoprotective effect relies on its ability to catabolize free heme and prevent it from sensitizing cells to undergo apoptosis. In terms of biological role, catalyzes the oxidative cleavage of heme at the alpha-methene bridge carbon, released as carbon monoxide (CO), to generate biliverdin IXalpha, while releasing the central heme iron chelate as ferrous iron. The sequence is that of Heme oxygenase 1 (Hmox1) from Rattus norvegicus (Rat).